The following is a 272-amino-acid chain: HMP-PP phosphatase (272 aa).

The active-site Nucleophile is Asp-8. Positions 8, 10, and 212 each coordinate Mg(2+).

Belongs to the HAD-like hydrolase superfamily. Cof family. The cofactor is Mg(2+).

The enzyme catalyses 4-amino-2-methyl-5-(diphosphooxymethyl)pyrimidine + H2O = 4-amino-2-methyl-5-(phosphooxymethyl)pyrimidine + phosphate + H(+). In terms of biological role, catalyzes the hydrolysis of 4-amino-2-methyl-5-hydroxymethylpyrimidine pyrophosphate (HMP-PP) to 4-amino-2-methyl-5-hydroxymethylpyrimidine phosphate (HMP-P). In Salmonella newport (strain SL254), this protein is HMP-PP phosphatase.